The primary structure comprises 373 residues: 4-hydroxy-3-methylbut-2-en-1-yl diphosphate synthase (flavodoxin) (373 aa).

[4Fe-4S] cluster is bound by residues Cys-270, Cys-273, Cys-305, and Glu-312.

The protein belongs to the IspG family. [4Fe-4S] cluster is required as a cofactor.

It catalyses the reaction (2E)-4-hydroxy-3-methylbut-2-enyl diphosphate + oxidized [flavodoxin] + H2O + 2 H(+) = 2-C-methyl-D-erythritol 2,4-cyclic diphosphate + reduced [flavodoxin]. The protein operates within isoprenoid biosynthesis; isopentenyl diphosphate biosynthesis via DXP pathway; isopentenyl diphosphate from 1-deoxy-D-xylulose 5-phosphate: step 5/6. Converts 2C-methyl-D-erythritol 2,4-cyclodiphosphate (ME-2,4cPP) into 1-hydroxy-2-methyl-2-(E)-butenyl 4-diphosphate. In Photorhabdus laumondii subsp. laumondii (strain DSM 15139 / CIP 105565 / TT01) (Photorhabdus luminescens subsp. laumondii), this protein is 4-hydroxy-3-methylbut-2-en-1-yl diphosphate synthase (flavodoxin).